A 232-amino-acid polypeptide reads, in one-letter code: 2,3-bisphosphoglycerate-dependent phosphoglycerate mutase 1 (232 aa).

Substrate-binding positions include 8 to 15 (RHGQSLWN), 21 to 22 (TG), R58, 114 to 117 (ERYY), K125, 141 to 142 (RR), and 185 to 186 (GN). Residue H9 is the Tele-phosphohistidine intermediate of the active site. The active-site Proton donor/acceptor is the E114.

The protein belongs to the phosphoglycerate mutase family. BPG-dependent PGAM subfamily.

It carries out the reaction (2R)-2-phosphoglycerate = (2R)-3-phosphoglycerate. Its pathway is carbohydrate degradation; glycolysis; pyruvate from D-glyceraldehyde 3-phosphate: step 3/5. Catalyzes the interconversion of 2-phosphoglycerate and 3-phosphoglycerate. This is 2,3-bisphosphoglycerate-dependent phosphoglycerate mutase 1 from Gloeobacter violaceus (strain ATCC 29082 / PCC 7421).